We begin with the raw amino-acid sequence, 65 residues long: Large ribosomal subunit protein bL35 (65 aa).

The interval 1 to 26 is disordered; it reads MPKIKTLRGAAKRFKKTASGGFKRKQ. The span at 10–26 shows a compositional bias: basic residues; that stretch reads AAKRFKKTASGGFKRKQ.

Belongs to the bacterial ribosomal protein bL35 family.

The polypeptide is Large ribosomal subunit protein bL35 (Histophilus somni (strain 2336) (Haemophilus somnus)).